The following is a 225-amino-acid chain: Glycerol-3-phosphate acyltransferase (225 aa).

The next 6 membrane-spanning stretches (helical) occupy residues 1–21 (MAIW…LGSF), 56–76 (GPGL…VALV), 95–115 (IGLW…LGHS), 134–154 (VLLV…ALVV), 159–178 (IVSL…MFVA), and 182–201 (LAYV…RHWA).

Belongs to the PlsY family. In terms of assembly, probably interacts with PlsX.

The protein localises to the cell inner membrane. It carries out the reaction an acyl phosphate + sn-glycerol 3-phosphate = a 1-acyl-sn-glycero-3-phosphate + phosphate. It functions in the pathway lipid metabolism; phospholipid metabolism. Catalyzes the transfer of an acyl group from acyl-phosphate (acyl-PO(4)) to glycerol-3-phosphate (G3P) to form lysophosphatidic acid (LPA). This enzyme utilizes acyl-phosphate as fatty acyl donor, but not acyl-CoA or acyl-ACP. In Acaryochloris marina (strain MBIC 11017), this protein is Glycerol-3-phosphate acyltransferase.